The chain runs to 342 residues: Phosphate acyltransferase (342 aa).

It belongs to the PlsX family. Homodimer. Probably interacts with PlsY.

It is found in the cytoplasm. It catalyses the reaction a fatty acyl-[ACP] + phosphate = an acyl phosphate + holo-[ACP]. The protein operates within lipid metabolism; phospholipid metabolism. Its function is as follows. Catalyzes the reversible formation of acyl-phosphate (acyl-PO(4)) from acyl-[acyl-carrier-protein] (acyl-ACP). This enzyme utilizes acyl-ACP as fatty acyl donor, but not acyl-CoA. The sequence is that of Phosphate acyltransferase from Shewanella sp. (strain MR-4).